The chain runs to 264 residues: NAD kinase (264 aa).

Asp45 serves as the catalytic Proton acceptor. Residues 45–46 (DG), His50, 121–122 (NE), Arg147, Asp149, Ala184, and Gln224 each bind NAD(+).

This sequence belongs to the NAD kinase family. Requires a divalent metal cation as cofactor.

Its subcellular location is the cytoplasm. It catalyses the reaction NAD(+) + ATP = ADP + NADP(+) + H(+). Functionally, involved in the regulation of the intracellular balance of NAD and NADP, and is a key enzyme in the biosynthesis of NADP. Catalyzes specifically the phosphorylation on 2'-hydroxyl of the adenosine moiety of NAD to yield NADP. The chain is NAD kinase from Lysinibacillus sphaericus (strain C3-41).